Consider the following 451-residue polypeptide: AAA-ATPase At3g50940 (451 aa).

The first 25 residues, M1–A25, serve as a signal peptide directing secretion. ATP is bound at residue G254 to S261.

Belongs to the AAA ATPase family. BCS1 subfamily. Mg(2+) serves as cofactor.

The catalysed reaction is ATP + H2O = ADP + phosphate + H(+). The sequence is that of AAA-ATPase At3g50940 from Arabidopsis thaliana (Mouse-ear cress).